A 241-amino-acid chain; its full sequence is Diacetyl reductase [(S)-acetoin forming] (241 aa).

6-30 (LVTGAGQGIGKAIALRLVKDGFAVA) lines the NAD(+) pocket. Residue Ser-139 participates in substrate binding. Tyr-152 acts as the Proton acceptor in catalysis. The active site involves Lys-156.

The protein belongs to the short-chain dehydrogenases/reductases (SDR) family. In terms of assembly, homotetramer.

The catalysed reaction is (S)-acetoin + NAD(+) = diacetyl + NADH + H(+). Functionally, catalyzes the irreversible reduction of 2,3-butanediol to (S)-acetoin in the presence of NADH. The sequence is that of Diacetyl reductase [(S)-acetoin forming] (budC) from Raoultella terrigena (Klebsiella terrigena).